We begin with the raw amino-acid sequence, 926 residues long: Lipoxygenase 4, chloroplastic (926 aa).

A chloroplast-targeting transit peptide spans 1–58 (MALANEIMGSRLIFERSSSLASPFHSRFSIKKKTQRTQFSINPFDPRPMRAVNSSGVV). One can recognise a PLAT domain in the interval 106–228 (FKETLVKHLD…DHPSKRILFT (123 aa)). Residues 231–926 (PYLPSETPSG…CRGVPNSVSI (696 aa)) form the Lipoxygenase domain. Fe cation-binding residues include H585, H590, H777, N781, and I926.

This sequence belongs to the lipoxygenase family. It depends on Fe cation as a cofactor. As to expression, expressed in leaves.

Its subcellular location is the plastid. The protein resides in the chloroplast. The enzyme catalyses (9Z,12Z)-octadecadienoate + O2 = (13S)-hydroperoxy-(9Z,11E)-octadecadienoate. The catalysed reaction is (9Z,12Z,15Z)-octadecatrienoate + O2 = (13S)-hydroperoxy-(9Z,11E,15Z)-octadecatrienoate. The protein operates within lipid metabolism; oxylipin biosynthesis. Functionally, plant lipoxygenases may be involved in a number of diverse aspects of plant physiology including growth and development, pest resistance, and senescence or responses to wounding. Catalyzes the hydroperoxidation of lipids containing a cis,cis-1,4-pentadiene structure. 13S-lipoxygenase that can use linolenic acid as substrates. This chain is Lipoxygenase 4, chloroplastic (LOX4), found in Arabidopsis thaliana (Mouse-ear cress).